A 319-amino-acid chain; its full sequence is Epoxyqueuosine reductase (319 aa).

D146 (proton donor) is an active-site residue. Residues 188–220 (ASLPADQPARSLCGHCQRCLPACPTAAITEPFV) enclose the 4Fe-4S ferredoxin-type domain. Positions 200, 203, 206, 210, 226, 250, 253, and 257 each coordinate [4Fe-4S] cluster.

The protein belongs to the QueG family. In terms of assembly, monomer. The cofactor is cob(II)alamin. Requires [4Fe-4S] cluster as cofactor.

The protein localises to the cytoplasm. It catalyses the reaction epoxyqueuosine(34) in tRNA + AH2 = queuosine(34) in tRNA + A + H2O. It functions in the pathway tRNA modification; tRNA-queuosine biosynthesis. Catalyzes the conversion of epoxyqueuosine (oQ) to queuosine (Q), which is a hypermodified base found in the wobble positions of tRNA(Asp), tRNA(Asn), tRNA(His) and tRNA(Tyr). In Synechococcus sp. (strain RCC307), this protein is Epoxyqueuosine reductase.